The chain runs to 801 residues: MSWVMVSPELVVAAAADLAGIGSAISSANAAAAVNTTGLLTAGADEVSTAIAALFGAQGQAYQAASAQAAAFYAQFVQALSAGGGAYAAAEAAAVSPLLAPINAQFVAATGRPLIGNGANGAPGTGANGGPGGWLIGNGGAGGSGAPGAGAGGNGGAGGLFGSGGAGGASTDVAGGAGGAGGAGGNAGMLFGAAGVGGVGGFSNGGATGGAGGAGGAGGLFGAGRERGSGGSGNLTGGAGGAGGNAGTLATGDGGAGGTGGASRSGGFGGAGGAGGDAGMFFGSGGSGGAGGISKSVGDSAAGGAGGAPGLIGNGGNGGNGGASTGGGDGGPGGAGGTGVLIGNGGNGGSGGTGATLGKAGIGGTGGVLLGLDGFTAPASTSPLHTLQQDVINMVNDPFQTLTGRPLIGNGANGTPGTGADGGAGGWLFGNGGNGGQGTIGGVNGGAGGAGGAGGILFGTGGTGGSGGPGATGLGGIGGAGGAALLFGSGGAGGSGGAGAVGGNGGAGGNAGALLGAAGAGGAGGAGAVGGNGGAGGNGGLFANGGAGGPGGFGSPAGAGGIGGAGGNGGLFGAGGTGGAGGGSTLAGGAGGAGGNGGLFGAGGTGGAGSHSTAAGVSGGAGGAGGDAGLLSLGASGGAGGSGGSSLTAAGVVGGIGGAGGLLFGSGGAGGSGGFSNSGNGGAGGAGGDAGLLVGSGGAGGAGASATGAATGGDGGAGGKSGAFGLGGDGGAGGATGLSGAFHIGGKGGVGGSAVLIGNGGNGGNGGNSGNAGKSGGAPGPSGAGGAGGLLLGENGLNGLM.

Residues 1-93 (MSWVMVSPEL…GGAYAAAEAA (93 aa)) enclose the PE domain.

The protein belongs to the mycobacterial PE family. PGRS subfamily.

This is an uncharacterized protein from Mycobacterium tuberculosis (strain ATCC 25618 / H37Rv).